The chain runs to 117 residues: Gamma-aminobutyric acid receptor-associated protein-like 1 (117 aa).

Glycine 116 is lipidated: Phosphatidylethanolamine amidated glycine; alternate. Residue glycine 116 is the site of Phosphatidylserine amidated glycine; alternate attachment. Lysine 117 is a propeptide (removed in mature form).

It belongs to the ATG8 family. In terms of assembly, interacts with ATG13, OPRK1, RB1CC1 and ULK1. Interacts with TP53INP1 and TP53INP2. Directly interacts with SQSTM1. Interacts with ATG3, ATG7 and MAP15. Interacts with TECPR2. Interacts with TBC1D5. Interacts with MAPK15. Interacts with TRIM5. Interacts with MEFV and TRIM21. Interacts with WDFY3. Interacts with the reticulophagy receptor TEX264. Interacts with UBA5. Interacts with KBTBD6 and KBTBD7; the interaction is direct. Interacts with reticulophagy regulators RETREG1, RETREG2 and RETREG3. Interacts with IRGM. Interacts with DNM2. Interacts with NCOA4 (via C-terminus). Post-translationally, the precursor molecule is cleaved by ATG4 (ATG4A, ATG4B, ATG4C or ATG4D) to expose the glycine at the C-terminus and form the cytosolic form, GABARAPL1-I. The processed form is then activated by APG7L/ATG7, transferred to ATG3 and conjugated to phosphatidylethanolamine (PE) phospholipid to form the membrane-bound form, GABARAPL1-II. During non-canonical autophagy, the processed form is conjugated to phosphatidylserine (PS) phospholipid. ATG4 proteins also mediate the delipidation of PE-conjugated forms required for GABARAPL1 recycling when autophagosomes fuse with lysosomes. In addition, ATG4B and ATG4D mediate delipidation of ATG8 proteins conjugated to PS during non-canonical autophagy. ATG4B constitutes the major protein for proteolytic activation. ATG4D is the main enzyme for delipidation activity.

It is found in the cytoplasmic vesicle. Its subcellular location is the autophagosome. The protein localises to the cytoplasmic vesicle membrane. It localises to the cytoplasm. The protein resides in the cytoskeleton. It is found in the endoplasmic reticulum. Its subcellular location is the golgi apparatus. Functionally, ubiquitin-like modifier that increases cell-surface expression of kappa-type opioid receptor through facilitating anterograde intracellular trafficking of the receptor. Involved in formation of autophagosomal vacuoles. While LC3s are involved in elongation of the phagophore membrane, the GABARAP/GATE-16 subfamily is essential for a later stage in autophagosome maturation. Through its interaction with the reticulophagy receptor TEX264, participates in the remodeling of subdomains of the endoplasmic reticulum into autophagosomes upon nutrient stress, which then fuse with lysosomes for endoplasmic reticulum turnover. This Pongo abelii (Sumatran orangutan) protein is Gamma-aminobutyric acid receptor-associated protein-like 1.